We begin with the raw amino-acid sequence, 459 residues long: Bifunctional protein GlmU (459 aa).

Residues 1–229 form a pyrophosphorylase region; that stretch reads MTNYAIILAA…FDESLGVNDR (229 aa). UDP-N-acetyl-alpha-D-glucosamine is bound by residues 8-11, K22, Q72, and 77-78; these read LAAG and GT. D102 contributes to the Mg(2+) binding site. UDP-N-acetyl-alpha-D-glucosamine-binding residues include G139, E154, N169, and N227. N227 contacts Mg(2+). The linker stretch occupies residues 230-250; that stretch reads VALATAESVMRRRINQQHMVN. The segment at 251-459 is N-acetyltransferase; it reads GVSFVNPHAT…KRLPHHPQNK (209 aa). Residues R332 and K350 each contribute to the UDP-N-acetyl-alpha-D-glucosamine site. H362 serves as the catalytic Proton acceptor. 2 residues coordinate UDP-N-acetyl-alpha-D-glucosamine: Y365 and N376. Residues A379, 385 to 386, S404, A422, and R439 each bind acetyl-CoA; that span reads NY.

The protein in the N-terminal section; belongs to the N-acetylglucosamine-1-phosphate uridyltransferase family. It in the C-terminal section; belongs to the transferase hexapeptide repeat family. As to quaternary structure, homotrimer. Mg(2+) serves as cofactor.

Its subcellular location is the cytoplasm. The enzyme catalyses alpha-D-glucosamine 1-phosphate + acetyl-CoA = N-acetyl-alpha-D-glucosamine 1-phosphate + CoA + H(+). It carries out the reaction N-acetyl-alpha-D-glucosamine 1-phosphate + UTP + H(+) = UDP-N-acetyl-alpha-D-glucosamine + diphosphate. The protein operates within nucleotide-sugar biosynthesis; UDP-N-acetyl-alpha-D-glucosamine biosynthesis; N-acetyl-alpha-D-glucosamine 1-phosphate from alpha-D-glucosamine 6-phosphate (route II): step 2/2. It functions in the pathway nucleotide-sugar biosynthesis; UDP-N-acetyl-alpha-D-glucosamine biosynthesis; UDP-N-acetyl-alpha-D-glucosamine from N-acetyl-alpha-D-glucosamine 1-phosphate: step 1/1. It participates in bacterial outer membrane biogenesis; LPS lipid A biosynthesis. Catalyzes the last two sequential reactions in the de novo biosynthetic pathway for UDP-N-acetylglucosamine (UDP-GlcNAc). The C-terminal domain catalyzes the transfer of acetyl group from acetyl coenzyme A to glucosamine-1-phosphate (GlcN-1-P) to produce N-acetylglucosamine-1-phosphate (GlcNAc-1-P), which is converted into UDP-GlcNAc by the transfer of uridine 5-monophosphate (from uridine 5-triphosphate), a reaction catalyzed by the N-terminal domain. This chain is Bifunctional protein GlmU, found in Streptococcus sanguinis (strain SK36).